We begin with the raw amino-acid sequence, 239 residues long: Major prion protein (239 aa).

Positions 1–15 (MLVLFVATWSDLGLC) are cleaved as a signal peptide. Positions 15-98 (CKKRPKPGGW…NQWNKPSKPK (84 aa)) are disordered. The interval 16–31 (KKRPKPGGWNTGGSRY) is interaction with ADGRG6. The interval 16–222 (KKRPKPGGWN…ESQAYYQRGS (207 aa)) is interaction with GRB2, ERI3 and SYN1. 5 tandem repeats follow at residues 44 to 51 (PQSGGWGQ), 52 to 59 (PHGGGWGQ), 60 to 67 (PHGGGWGQ), 68 to 75 (PHGGGWGQ), and 76 to 83 (PHGGGWGQ). The tract at residues 44–83 (PQSGGWGQPHGGGWGQPHGGGWGQPHGGGWGQPHGGGWGQ) is 5 X 8 AA tandem repeats of P-H-G-G-G-W-G-Q. Residues 47 to 87 (GGWGQPHGGGWGQPHGGGWGQPHGGGWGQPHGGGWGQGGGT) show a composition bias toward gly residues. Residues H53, G54, G55, H61, G62, G63, H69, G70, G71, H77, G78, and G79 each coordinate Cu(2+). A disulfide bond links C171 and C206. Residues N173 and N189 are each glycosylated (N-linked (GlcNAc...) asparagine). The GPI-anchor amidated serine moiety is linked to residue S222. A propeptide spans 223-239 (SMVLFSSPPVILLISFL) (removed in mature form).

This sequence belongs to the prion family. In terms of assembly, monomer and homodimer. Has a tendency to aggregate into amyloid fibrils containing a cross-beta spine, formed by a steric zipper of superposed beta-strands. Soluble oligomers may represent an intermediate stage on the path to fibril formation. Copper binding may promote oligomerization. Interacts with GRB2, APP, ERI3/PRNPIP and SYN1. Mislocalized cytosolically exposed PrP interacts with MGRN1; this interaction alters MGRN1 subcellular location and causes lysosomal enlargement. Interacts with APP. Interacts with KIAA1191. Interacts with ADGRG6.

It is found in the cell membrane. The protein localises to the golgi apparatus. Its function is as follows. Its primary physiological function is unclear. May play a role in neuronal development and synaptic plasticity. May be required for neuronal myelin sheath maintenance. May promote myelin homeostasis through acting as an agonist for ADGRG6 receptor. May play a role in iron uptake and iron homeostasis. Soluble oligomers are toxic to cultured neuroblastoma cells and induce apoptosis (in vitro). Association with GPC1 (via its heparan sulfate chains) targets PRNP to lipid rafts. Also provides Cu(2+) or Zn(2+) for the ascorbate-mediated GPC1 deaminase degradation of its heparan sulfate side chains. This chain is Major prion protein (PRNP), found in Aotus trivirgatus (Three-striped night monkey).